Here is a 226-residue protein sequence, read N- to C-terminus: Probable septum site-determining protein MinC (226 aa).

The protein belongs to the MinC family. In terms of assembly, interacts with MinD and FtsZ.

Functionally, cell division inhibitor that blocks the formation of polar Z ring septums. Rapidly oscillates between the poles of the cell to destabilize FtsZ filaments that have formed before they mature into polar Z rings. Prevents FtsZ polymerization. The chain is Probable septum site-determining protein MinC from Edwardsiella ictaluri (strain 93-146).